We begin with the raw amino-acid sequence, 63 residues long: Cysteine-rich venom protein 3 (63 aa).

A signal peptide spans 1 to 25; sequence MRKPITLILVVALALVLLATSEVSA. 3 disulfide bridges follow: cysteine 29-cysteine 43, cysteine 36-cysteine 48, and cysteine 42-cysteine 58.

As to expression, expressed by the venom gland.

It localises to the secreted. This is Cysteine-rich venom protein 3 from Pimpla hypochondriaca (Parasitoid wasp).